Here is an 808-residue protein sequence, read N- to C-terminus: Phosphoinositide phosphatase SAC2 (808 aa).

An SAC domain is found at 158 to 551 (LCTVDLTKDF…GDTLALQYGG (394 aa)). The interval 429–476 (FQNQNPSTLENDDGECSTYDPPSKDETAPNLVVENGNDSKDAKEDQQK) is disordered. The span at 465 to 476 (NDSKDAKEDQQK) shows a compositional bias: basic and acidic residues. Positions 487 to 498 (RTNCIDCLDRTN) match the Phosphatase catalytic core motif.

Component of the PI(3,5)P2 regulatory complex at least composed of ATG18, SAC/FIG4, FAB1 and VAC14. The cofactor is Mg(2+). In terms of tissue distribution, ubiquitous with a higher level of expression in young seedlings than in other tissues.

The protein localises to the vacuole membrane. It carries out the reaction a 1,2-diacyl-sn-glycero-3-phospho-(1D-myo-inositol-3,5-bisphosphate) + H2O = a 1,2-diacyl-sn-glycero-3-phospho-(1D-myo-inositol-3-phosphate) + phosphate. In terms of biological role, the PI(3,5)P2 regulatory complex regulates both the synthesis and turnover of phosphatidylinositol 3,5-bisphosphate (PtdIns(3,5)P2). This is Phosphoinositide phosphatase SAC2 (SAC2) from Arabidopsis thaliana (Mouse-ear cress).